We begin with the raw amino-acid sequence, 511 residues long: Colicin-B (511 aa).

The short motif at 17–24 (DTMVVWPS) is the TonB box element. 2 helical membrane passes run 455-475 (MASA…LIAF) and 477-497 (LSAT…GAFI).

Belongs to the channel forming colicin family.

It is found in the cell membrane. Its function is as follows. This colicin is a channel-forming colicin. This class of transmembrane toxins depolarize the cytoplasmic membrane, leading to dissipation of cellular energy. In terms of biological role, colicins are polypeptide toxins produced by and active against E.coli and closely related bacteria. The chain is Colicin-B (cba) from Escherichia coli.